The primary structure comprises 266 residues: UPF0294 protein YafD (266 aa).

This sequence belongs to the UPF0294 family.

It localises to the cytoplasm. This is UPF0294 protein YafD from Salmonella agona (strain SL483).